Here is a 260-residue protein sequence, read N- to C-terminus: Carbonic anhydrase 3 (260 aa).

Alanine 2 bears the N-acetylalanine mark. One can recognise an Alpha-carbonic anhydrase domain in the interval 3–259 (KEWGYASHNG…VKGRVVRASF (257 aa)). A phosphoserine mark is found at serine 29, serine 43, serine 48, serine 50, and serine 55. The involved in proton transfer stretch occupies residues 64–67 (KTCR). Position 73 is a phosphothreonine (threonine 73). Residues histidine 94, histidine 96, and histidine 119 each coordinate Zn(2+). Tyrosine 127 carries the post-translational modification Phosphotyrosine. A phosphothreonine mark is found at threonine 129 and threonine 176. S-glutathionyl cysteine occurs at positions 182 and 187. Position 198 to 199 (198 to 199 (TT)) interacts with substrate. Phosphothreonine is present on threonine 216. A Phosphoserine modification is found at serine 219.

It belongs to the alpha-carbonic anhydrase family. The cofactor is Zn(2+). S-thiolated both by thiol-disulfide exchange with glutathione disulfide and by oxyradical-initiated S-thiolation with reduced glutathione. Post-translationally, S-glutathionylated in hepatocytes under oxidative stress. As to expression, expressed at lower levels in adipose tissue from animals that were either genetically obese or had experimentally induced obesity.

Its subcellular location is the cytoplasm. It carries out the reaction hydrogencarbonate + H(+) = CO2 + H2O. Inhibited by acetazolamide. In terms of biological role, reversible hydration of carbon dioxide. This is Carbonic anhydrase 3 from Mus musculus (Mouse).